The primary structure comprises 92 residues: Alpha-conotoxin VxXXA (92 aa).

A signal peptide spans 1 to 24 (MPKLEMMLLVLLIFPLSYFIAAGG). Positions 25-45 (QVVQVDRRGDGLAGYLQRGDR) are excised as a propeptide. Residues Pro55, Pro70, and Pro74 each carry the 4-hydroxyproline; partial modification. 4 disulfide bridges follow: Cys63–Cys72, Cys68–Cys80, Cys73–Cys90, and Cys78–Cys92.

This sequence belongs to the conotoxin D superfamily. Homodimer or pseudo-homodimer. Three dimers exist: homodimer of VxXXA, pseudo-homodimer of both VxXXA and [hydroxyPro-74]VxXXA and homodimer of [hydroxyPro-74]VxXXA. These three components exist in a 1:2:1 ratio. VxXXA stands for the form with the Pro-55 hydroxylated. A second major form has both Pro-55 and Pro-74 hydroxylated. The two major forms VxXXA and [hydroxyPro-74]VxXXA exist in a 1:1 ratio. In terms of processing, minor forms are [hydroxyPro-70,hydroxyPro-74]VxXXA and [Pro-55]VxXXA. Expressed by the venom duct.

It is found in the secreted. In terms of biological role, alpha-conotoxins act on postsynaptic membranes, they bind to the nicotinic acetylcholine receptors (nAChR) and thus inhibit them. Through its two C-terminal domains, this homodimeric protein would bind to two nAChR allosteric sites, located outside the nAChR C-loop of the principal binding face and at the adjacent binding interface in a clockwise direction. This toxin specifically blocks mammalian neuronal nAChR of the alpha-7/CHRNA7, alpha-3-beta-2/CHRNA3-CHRNB2 (IC(50)=370 nM) and alpha-4-beta-2/CHRNA4-CHRNB2 subtypes. VxXXB inhibits alpha-7/CHRNA7 and alpha-3-beta-2/CHRNA3-CHRNB2 nAChR subtypes with the highest efficiency, followed by VxXXA and VxXXC. VxXXB and VxXXC inhibit the alpha-4-beta-2/CHRNA4-CHRNB2 nAChR subtype more efficiently than VxXXA. The protein is Alpha-conotoxin VxXXA of Conus vexillum (Flag cone).